An 875-amino-acid polypeptide reads, in one-letter code: Circadian locomoter output cycles protein kaput (875 aa).

Residues 32–47 (DKAKRVSRNKSEKKRR) carry the Nuclear localization signal motif. In terms of domain architecture, bHLH spans 34–84 (AKRVSRNKSEKKRRDQFNVLIKELGSMLPGNARKMDKSTVLQKSIDFLRKH). Ser38 and Ser42 each carry phosphoserine. Lys67 participates in a covalent cross-link: Glycyl lysine isopeptide (Lys-Gly) (interchain with G-Cter in SUMO1). PAS domains follow at residues 107–177 (NEEF…LLES) and 262–332 (FIKE…MQYG). In terms of domain architecture, PAC spans 336 to 379 (SCYYRFLTKGQQWIWLQTHYYITYHQWNSRPEFIVCTHTVVSYA). Position 408 is a phosphoserine (Ser408). The disordered stretch occupies residues 420-507 (ALERFDTSPT…TMSQPATLQL (88 aa)). Ser427 is modified (phosphoserine; by GSK3-beta). Over residues 447-468 (DHSSTPTKMTVDTSTPPRQSLS) the composition is skewed to polar residues. Phosphothreonine; by CDK5 is present on residues Thr451 and Thr461. Residues 476-490 (RRSSLSSQSLSSQSL) are compositionally biased toward low complexity. Residues 491–507 (GQPVTQPTMSQPATLQL) are compositionally biased toward polar residues. Residues 516–566 (FQFSAQLGAMQHLKDQLEQRTRMIEANIHRQQEELRKIQEQLQIVHGQGLQ) are implicated in the circadian rhythmicity. 3 disordered regions span residues 628 to 674 (TQSG…AGQS), 794 to 813 (QQQLTAVQQPAQPQLTQHPQ), and 842 to 875 (TFTQSHHQQHQPQQQQLSRHRTDKMTDPSKAQPQ). The span at 842–857 (TFTQSHHQQHQPQQQQ) shows a compositional bias: low complexity. A Glycyl lysine isopeptide (Lys-Gly) (interchain with G-Cter in SUMO1) cross-link involves residue Lys871.

As to quaternary structure, component of the circadian clock oscillator which includes the CRY proteins, CLOCK or NPAS2, BMAL1 or BMAL2, CSNK1D and/or CSNK1E, TIMELESS and the PER proteins. Forms a heterodimer with BMAL1. The CLOCK-BMAL1 heterodimer is required for E-box-dependent transactivation, for CLOCK nuclear translocation and degradation, and for phosphorylation of both CLOCK and BMAL1. Interaction with PER and CRY proteins requires translocation to the nucleus. Interaction of the CLOCK-BMAL1 heterodimer with PER or CRY inhibits transcription activation. Interacts with BMAL2. Ubiquitinated, leading to its proteasomal degradation. In terms of processing, O-glycosylated; contains O-GlcNAc. O-glycosylation by OGT prevents protein degradation by inhibiting ubiquitination. It also stabilizes the CLOCK-BMAL1 heterodimer thereby increasing CLOCK-BMAL1-mediated transcriptional activation of PER1/2/3 and CRY1/2. Post-translationally, phosphorylation is dependent on the CLOCK-BMAL1 heterodimer formation. Phosphorylation enhances the transcriptional activity, alters the subcellular localization and decreases the stability of the heterodimer by promoting its degradation. Sumoylation enhances its transcriptional activity and interaction with ESR1, resulting in up-regulation of ESR1 activity. Estrogen stimulates sumoylation. Desumoylation by SENP1 negatively regulates its transcriptional activity. In terms of processing, undergoes lysosome-mediated degradation in a time-dependent manner in the liver. In terms of tissue distribution, expressed in the retinal photoreceptor cells (at protein level). Isoform 1 is expressed in both the retina and pineal gland. Isoform 2 is expressed mainly in the pineal gland.

It localises to the cytoplasm. Its subcellular location is the nucleus. The protein localises to the cytosol. Functionally, transcriptional activator which forms a core component of the circadian clock. The circadian clock, an internal time-keeping system, regulates various physiological processes through the generation of approximately 24 hour circadian rhythms in gene expression, which are translated into rhythms in metabolism and behavior. It is derived from the Latin roots 'circa' (about) and 'diem' (day) and acts as an important regulator of a wide array of physiological functions including metabolism, sleep, body temperature, blood pressure, endocrine, immune, cardiovascular, and renal function. Consists of two major components: the central clock, residing in the suprachiasmatic nucleus (SCN) of the brain, and the peripheral clocks that are present in nearly every tissue and organ system. Both the central and peripheral clocks can be reset by environmental cues, also known as Zeitgebers (German for 'timegivers'). The predominant Zeitgeber for the central clock is light, which is sensed by retina and signals directly to the SCN. The central clock entrains the peripheral clocks through neuronal and hormonal signals, body temperature and feeding-related cues, aligning all clocks with the external light/dark cycle. Circadian rhythms allow an organism to achieve temporal homeostasis with its environment at the molecular level by regulating gene expression to create a peak of protein expression once every 24 hours to control when a particular physiological process is most active with respect to the solar day. Transcription and translation of core clock components (CLOCK, NPAS2, BMAL1, BMAL2, PER1, PER2, PER3, CRY1 and CRY2) plays a critical role in rhythm generation, whereas delays imposed by post-translational modifications (PTMs) are important for determining the period (tau) of the rhythms (tau refers to the period of a rhythm and is the length, in time, of one complete cycle). A diurnal rhythm is synchronized with the day/night cycle, while the ultradian and infradian rhythms have a period shorter and longer than 24 hours, respectively. Disruptions in the circadian rhythms contribute to the pathology of cardiovascular diseases, cancer, metabolic syndromes and aging. A transcription/translation feedback loop (TTFL) forms the core of the molecular circadian clock mechanism. Transcription factors, CLOCK or NPAS2 and BMAL1 or BMAL2, form the positive limb of the feedback loop, act in the form of a heterodimer and activate the transcription of core clock genes and clock-controlled genes (involved in key metabolic processes), harboring E-box elements (5'-CACGTG-3') within their promoters. The core clock genes: PER1/2/3 and CRY1/2 which are transcriptional repressors form the negative limb of the feedback loop and interact with the CLOCK|NPAS2-BMAL1|BMAL2 heterodimer inhibiting its activity and thereby negatively regulating their own expression. This heterodimer also activates nuclear receptors NR1D1/2 and RORA/B/G, which form a second feedback loop and which activate and repress BMAL1 transcription, respectively. CLOCK regulates the circadian expression of AANAT in the retinal photoreceptor cells. The preferred binding motif for the CLOCK-BMAL1 heterodimer is 5'-CACGTGA-3', which contains a flanking adenine nucleotide at the 3-prime end of the canonical 6-nucleotide E-box sequence. CLOCK specifically binds to the half-site 5'-CAC-3', while BMAL1 binds to the half-site 5'-GTGA-3'. This chain is Circadian locomoter output cycles protein kaput (CLOCK), found in Gallus gallus (Chicken).